Here is a 250-residue protein sequence, read N- to C-terminus: Glycerol-1-phosphate phosphohydrolase 1 (250 aa).

Aspartate 18 functions as the Nucleophile in the catalytic mechanism. Residues aspartate 18 and aspartate 20 each contribute to the Mg(2+) site. The Proton donor role is filled by aspartate 20. Lysine 64 participates in a covalent cross-link: Glycyl lysine isopeptide (Lys-Gly) (interchain with G-Cter in SUMO); alternate. Lysine 64 participates in a covalent cross-link: Glycyl lysine isopeptide (Lys-Gly) (interchain with G-Cter in ubiquitin); alternate. Residue serine 90 is modified to Phosphoserine. Lysine 144 participates in a covalent cross-link: Glycyl lysine isopeptide (Lys-Gly) (interchain with G-Cter in ubiquitin). Aspartate 179 contacts Mg(2+).

This sequence belongs to the HAD-like hydrolase superfamily. DOG/GPP family. In terms of assembly, monomer. Mg(2+) is required as a cofactor.

The protein localises to the cytoplasm. Its subcellular location is the nucleus. The enzyme catalyses sn-glycerol 1-phosphate + H2O = glycerol + phosphate. It catalyses the reaction sn-glycerol 3-phosphate + H2O = glycerol + phosphate. Its function is as follows. Major isoform of glycerol-1-phosphate phosphohydrolase involved in glycerol biosynthesis. Plays a role in osmoadaptation and required for adaptation to anaerobic conditions. This Saccharomyces cerevisiae (strain ATCC 204508 / S288c) (Baker's yeast) protein is Glycerol-1-phosphate phosphohydrolase 1.